We begin with the raw amino-acid sequence, 234 residues long: MKKTFFIADLHLSENRPHLTELFVHFMQTQAPQAEKLYILGDLFDFWIGDDEQSALIETVQQQILQLTQKGISCYFIHGNRDFLVGRQFANSCGMELLPTYQIVNLYGKKVLICHGDTLCTDDLAYQQYRKKVQQKWLQWLFLHLPLKVRLKIAEKIRQKSKTDKTHKSIEIMDVNKDFVEQIMQQFQVNILIHGHTHKQNIHQNPPHFTRIVLGDWGATASVLEVSANGFQFI.

5 residues coordinate Mn(2+): Asp9, His11, Asp42, Asn80, and His115. 80–81 (NR) is a substrate binding site. Substrate is bound by residues Asp123, Ser161, Lys165, Lys168, and His196. Positions 196 and 198 each coordinate Mn(2+).

It belongs to the LpxH family. It depends on Mn(2+) as a cofactor.

Its subcellular location is the cell inner membrane. It catalyses the reaction UDP-2-N,3-O-bis[(3R)-3-hydroxytetradecanoyl]-alpha-D-glucosamine + H2O = 2-N,3-O-bis[(3R)-3-hydroxytetradecanoyl]-alpha-D-glucosaminyl 1-phosphate + UMP + 2 H(+). The protein operates within glycolipid biosynthesis; lipid IV(A) biosynthesis; lipid IV(A) from (3R)-3-hydroxytetradecanoyl-[acyl-carrier-protein] and UDP-N-acetyl-alpha-D-glucosamine: step 4/6. Its function is as follows. Hydrolyzes the pyrophosphate bond of UDP-2,3-diacylglucosamine to yield 2,3-diacylglucosamine 1-phosphate (lipid X) and UMP by catalyzing the attack of water at the alpha-P atom. Involved in the biosynthesis of lipid A, a phosphorylated glycolipid that anchors the lipopolysaccharide to the outer membrane of the cell. This is UDP-2,3-diacylglucosamine hydrolase from Histophilus somni (strain 2336) (Haemophilus somnus).